A 156-amino-acid polypeptide reads, in one-letter code: Small ribosomal subunit protein uS7c (156 aa).

It belongs to the universal ribosomal protein uS7 family. As to quaternary structure, part of the 30S ribosomal subunit.

The protein resides in the plastid. It is found in the chloroplast. Functionally, one of the primary rRNA binding proteins, it binds directly to 16S rRNA where it nucleates assembly of the head domain of the 30S subunit. This Phaeodactylum tricornutum (strain CCAP 1055/1) protein is Small ribosomal subunit protein uS7c (rps7).